Reading from the N-terminus, the 491-residue chain is Proline--tRNA ligase (491 aa).

Belongs to the class-II aminoacyl-tRNA synthetase family. ProS type 3 subfamily. As to quaternary structure, homodimer.

The protein localises to the cytoplasm. It catalyses the reaction tRNA(Pro) + L-proline + ATP = L-prolyl-tRNA(Pro) + AMP + diphosphate. Catalyzes the attachment of proline to tRNA(Pro) in a two-step reaction: proline is first activated by ATP to form Pro-AMP and then transferred to the acceptor end of tRNA(Pro). The polypeptide is Proline--tRNA ligase (Halorubrum lacusprofundi (strain ATCC 49239 / DSM 5036 / JCM 8891 / ACAM 34)).